Here is a 459-residue protein sequence, read N- to C-terminus: Glutamyl-tRNA reductase (459 aa).

Residues Thr49–Arg52, Ser109, Glu114–Gln116, and Gln120 contribute to the substrate site. Catalysis depends on Cys50, which acts as the Nucleophile. Gly189–Gly194 serves as a coordination point for NADP(+).

Belongs to the glutamyl-tRNA reductase family. As to quaternary structure, homodimer.

The enzyme catalyses (S)-4-amino-5-oxopentanoate + tRNA(Glu) + NADP(+) = L-glutamyl-tRNA(Glu) + NADPH + H(+). The protein operates within porphyrin-containing compound metabolism; protoporphyrin-IX biosynthesis; 5-aminolevulinate from L-glutamyl-tRNA(Glu): step 1/2. Functionally, catalyzes the NADPH-dependent reduction of glutamyl-tRNA(Glu) to glutamate 1-semialdehyde (GSA). This is Glutamyl-tRNA reductase from Halalkalibacterium halodurans (strain ATCC BAA-125 / DSM 18197 / FERM 7344 / JCM 9153 / C-125) (Bacillus halodurans).